An 83-amino-acid chain; its full sequence is Small ribosomal subunit protein eS21 (83 aa).

Met1 bears the N-acetylmethionine mark. A Glycyl lysine isopeptide (Lys-Gly) (interchain with G-Cter in SUMO2) cross-link involves residue Lys41. Lys81 carries the N6-acetyllysine modification.

Belongs to the eukaryotic ribosomal protein eS21 family. In terms of assembly, component of the 40S small ribosomal subunit.

It is found in the cytoplasm. The protein localises to the cytosol. Its subcellular location is the rough endoplasmic reticulum. Component of the small ribosomal subunit. The ribosome is a large ribonucleoprotein complex responsible for the synthesis of proteins in the cell. This is Small ribosomal subunit protein eS21 (RPS21) from Sus scrofa (Pig).